The sequence spans 473 residues: Sulfhydrylase-like protein lolC2 (473 aa).

Position 226 is an N6-(pyridoxal phosphate)lysine (Lys-226).

It belongs to the trans-sulfuration enzymes family. Requires pyridoxal 5'-phosphate as cofactor.

The protein operates within alkaloid biosynthesis. Sulfhydrylase-like protein; part of the gene cluster that mediates the biosynthesis of loline alkaloids, potent insecticidal agents composed of a pyrrolizidine ring system and an uncommon ether bridge linking carbons 2 and 7. Lolines are structurally differentiated by the various modifications of the L-amino group and include norloline, loline, N-methylloline, N-acetylloline, N-acetylnorloline, and N-formylloline. The first committed step is the condensation of O-acetyl-L-homoserine (derived from L-aspartic acid) and L-proline, probably catalyzed by the gamma-type pyridoxal 5'-phosphate(PLP)-dependent enzyme lolC, to give the diamino diacid, NACPP. Ensuing cyclization, decarboxylation, and acetylation steps yield 1-exo-acetamidopyrrolizidine (AcAP). LolO is required for installation of the ether bridge upon the pathway intermediate, 1-exo-acetamidopyrrolizidine (AcAP). In sequential 2-oxoglutarate- and O(2)-consuming steps, lolO removes hydrogens from C2 and C7 of AcAP to form both carbon-oxygen bonds in N-acetylnorloline (NANL), the precursor to all other lolines. The enzymes lolD, lolE, lolF and lolT have also been proposed to be involved in the ether-bridge installation. Further processing of the exocyclic moiety of NANL by fungal N-acetamidase (LolN), methyltransferase (LolM), and cytochrome P450 (LolP) enzymes, with occasional involvement of a plant acetyltransferase, generates the other known lolines. LolN transforms NANL to norlonine which is monomethylated and dimethylated to respectively lonine and N-methyllonine (NML) by lolM. LolP catalyzes hydroxylation of the methyl group in N-methylloline (NML) and further oxygenation to N-formylloline (NFL). A plant acetyltransferase is responsible for the acetylation of loline to form N-acetylloline (NAL). LolA might interact with aspartate kinase to prevent feedback inhibition of its activity by these end products and thereby promote production of L-homoserine from L-aspartate. This chain is Sulfhydrylase-like protein lolC2, found in Epichloe uncinata (Endophyte fungus).